Here is a 139-residue protein sequence, read N- to C-terminus: Proline-rich protein 13 (139 aa).

The tract at residues 1-139 (MWNPSAGPNP…SSSSSSSDSD (139 aa)) is disordered. Pro residues-rich tracts occupy residues 24–62 (ACPPSQNPAFPPGPCPPGIPQGNPAFPPCRPPYPVPQPG) and 70–91 (GPYPPPYPPAAPGMCPVNPPAP). The segment covering 103-124 (KTRKKMKKAHKKSHKHHKHGKH) has biased composition (basic residues). The segment covering 125 to 139 (SSSSSSSSSSSSDSD) has biased composition (low complexity).

It localises to the nucleus. In terms of biological role, negatively regulates TSP1 expression at the level of transcription. This down-regulation was shown to reduce taxane-induced apoptosis. This chain is Proline-rich protein 13 (Prr13), found in Rattus norvegicus (Rat).